Reading from the N-terminus, the 469-residue chain is 3-isopropylmalate dehydratase large subunit (469 aa).

Positions 349, 410, and 413 each coordinate [4Fe-4S] cluster.

This sequence belongs to the aconitase/IPM isomerase family. LeuC type 1 subfamily. As to quaternary structure, heterodimer of LeuC and LeuD. The cofactor is [4Fe-4S] cluster.

It catalyses the reaction (2R,3S)-3-isopropylmalate = (2S)-2-isopropylmalate. It functions in the pathway amino-acid biosynthesis; L-leucine biosynthesis; L-leucine from 3-methyl-2-oxobutanoate: step 2/4. Functionally, catalyzes the isomerization between 2-isopropylmalate and 3-isopropylmalate, via the formation of 2-isopropylmaleate. The sequence is that of 3-isopropylmalate dehydratase large subunit from Neisseria meningitidis serogroup C / serotype 2a (strain ATCC 700532 / DSM 15464 / FAM18).